A 39-amino-acid polypeptide reads, in one-letter code: Potassium channel toxin alpha-KTx 2.2 (39 aa).

3 disulfides stabilise this stretch: Cys-7–Cys-29, Cys-13–Cys-34, and Cys-17–Cys-36. The interaction with Kv1.3 channels stretch occupies residues Tyr-37 to His-39.

This sequence belongs to the short scorpion toxin superfamily. Potassium channel inhibitor family. Alpha-KTx 02 subfamily. Expressed by the venom gland.

Its subcellular location is the secreted. Its function is as follows. Potent inhibitor of voltage-gated potassium channels such as Kv1.1/KCNA1 (IC(50)=0.144 nM), Kv1.2/KCNA2 (IC(50)=0.675 nM), Kv1.3/KCNA3 (IC(50)=0.23 nM) and Shaker (Kd=160 nM). Suppresses expression of the Kv1.3/KCNA3 channel in lipopolysaccharide (LPS)-stimulated mouse macrophages. Down-regulates secretion of nitric oxide (NO) and inflammatory cytokines, such as TNF-alpha/TNF, IL-1beta/IL1B and IL6, in LPS-stimulated mouse macrophages in a manner dependent on Kv1.3/KCNA3 channel blockage. Reduces activation of MAPK and NF-kappa-B signaling pathways in LPS-stimulated mouse macrophages. Modulates intracellular Ca(2+) signaling in human PMA/ionomycin-triggered T-cells. Interferes with the activation of the MAPK, NF-kappa-B and NFATc1 pathways in human PMA/ionomycin-triggered T-cells. Reduces proliferation of human PMA/ionomycin-triggered T-cells. Down-regulates secretion of cytokines, such as TNF-alpha/TNF and IL2, in human PMA/ionomycin-triggered T-cells. This chain is Potassium channel toxin alpha-KTx 2.2, found in Centruroides margaritatus (Central American bark Scorpion).